The primary structure comprises 138 residues: Small ribosomal subunit protein uS11c (138 aa).

Residues Met-1–Val-22 form a disordered region.

It belongs to the universal ribosomal protein uS11 family. Part of the 30S ribosomal subunit.

It localises to the plastid. This Cuscuta reflexa (Southern Asian dodder) protein is Small ribosomal subunit protein uS11c.